The primary structure comprises 77 residues: Acyl carrier protein (77 aa).

The region spanning 1-76 (MENFDKVKDI…DAVKFINSLE (76 aa)) is the Carrier domain. O-(pantetheine 4'-phosphoryl)serine is present on serine 36.

It belongs to the acyl carrier protein (ACP) family. 4'-phosphopantetheine is transferred from CoA to a specific serine of apo-ACP by AcpS. This modification is essential for activity because fatty acids are bound in thioester linkage to the sulfhydryl of the prosthetic group.

The protein localises to the cytoplasm. Its pathway is lipid metabolism; fatty acid biosynthesis. In terms of biological role, carrier of the growing fatty acid chain in fatty acid biosynthesis. The chain is Acyl carrier protein from Staphylococcus aureus (strain Mu3 / ATCC 700698).